A 447-amino-acid chain; its full sequence is Argininosuccinate lyase (447 aa).

It belongs to the lyase 1 family. Argininosuccinate lyase subfamily.

It localises to the cytoplasm. The catalysed reaction is 2-(N(omega)-L-arginino)succinate = fumarate + L-arginine. Its pathway is amino-acid biosynthesis; L-arginine biosynthesis; L-arginine from L-ornithine and carbamoyl phosphate: step 3/3. In Bacteroides fragilis (strain YCH46), this protein is Argininosuccinate lyase.